Here is a 360-residue protein sequence, read N- to C-terminus: Phospho-N-acetylmuramoyl-pentapeptide-transferase (360 aa).

The next 10 helical transmembrane spans lie at arginine 24–isoleucine 44, glycine 69–tryptophan 89, tryptophan 92–phenylalanine 112, methionine 133–asparagine 153, isoleucine 158–valine 178, glycine 199–serine 219, valine 239–tyrosine 259, valine 263–isoleucine 283, phenylalanine 288–valine 308, and glutamine 337–leucine 357.

This sequence belongs to the glycosyltransferase 4 family. MraY subfamily. Requires Mg(2+) as cofactor.

The protein localises to the cell inner membrane. It carries out the reaction UDP-N-acetyl-alpha-D-muramoyl-L-alanyl-gamma-D-glutamyl-meso-2,6-diaminopimeloyl-D-alanyl-D-alanine + di-trans,octa-cis-undecaprenyl phosphate = di-trans,octa-cis-undecaprenyl diphospho-N-acetyl-alpha-D-muramoyl-L-alanyl-D-glutamyl-meso-2,6-diaminopimeloyl-D-alanyl-D-alanine + UMP. It functions in the pathway cell wall biogenesis; peptidoglycan biosynthesis. Catalyzes the initial step of the lipid cycle reactions in the biosynthesis of the cell wall peptidoglycan: transfers peptidoglycan precursor phospho-MurNAc-pentapeptide from UDP-MurNAc-pentapeptide onto the lipid carrier undecaprenyl phosphate, yielding undecaprenyl-pyrophosphoryl-MurNAc-pentapeptide, known as lipid I. This is Phospho-N-acetylmuramoyl-pentapeptide-transferase from Neisseria meningitidis serogroup C / serotype 2a (strain ATCC 700532 / DSM 15464 / FAM18).